A 513-amino-acid polypeptide reads, in one-letter code: ATP synthase subunit alpha (513 aa).

169 to 176 (GDRQTGKS) provides a ligand contact to ATP.

This sequence belongs to the ATPase alpha/beta chains family. In terms of assembly, F-type ATPases have 2 components, CF(1) - the catalytic core - and CF(0) - the membrane proton channel. CF(1) has five subunits: alpha(3), beta(3), gamma(1), delta(1), epsilon(1). CF(0) has three main subunits: a(1), b(2) and c(9-12). The alpha and beta chains form an alternating ring which encloses part of the gamma chain. CF(1) is attached to CF(0) by a central stalk formed by the gamma and epsilon chains, while a peripheral stalk is formed by the delta and b chains.

It localises to the cell inner membrane. The enzyme catalyses ATP + H2O + 4 H(+)(in) = ADP + phosphate + 5 H(+)(out). Functionally, produces ATP from ADP in the presence of a proton gradient across the membrane. The alpha chain is a regulatory subunit. The chain is ATP synthase subunit alpha from Blochmanniella floridana.